Reading from the N-terminus, the 431-residue chain is Chaperone SurA (431 aa).

A signal peptide spans 1–22 (MKLWKPTLISVLSALTLFNAHA). 2 consecutive PpiC domains span residues 173 to 271 (TVQY…KIDD) and 280 to 380 (VTEV…EVLD).

The protein resides in the periplasm. It carries out the reaction [protein]-peptidylproline (omega=180) = [protein]-peptidylproline (omega=0). Chaperone involved in the correct folding and assembly of outer membrane proteins. Recognizes specific patterns of aromatic residues and the orientation of their side chains, which are found more frequently in integral outer membrane proteins. May act in both early periplasmic and late outer membrane-associated steps of protein maturation. This chain is Chaperone SurA, found in Vibrio cholerae serotype O1 (strain ATCC 39315 / El Tor Inaba N16961).